Here is a 338-residue protein sequence, read N- to C-terminus: MFSILGNSSKKKRNTQIYRIFFTLTFSLSNLFLAICYLFLNVRTVSSDSSVSLYDRQLFDQSSSVILNPDTSDPSIVLSSLETMRDLAHDIKFGQDVLEQPLCDQLFVLMDGKDYPNTIRSMSSVVLASALSNNFIAQKKALEMNIMPKIVNTLRQENHPVTLLKKLFLLSKSVQSFPLSEAFISKDLGSAILLQLYDFWSRNSHIDIPSAFQEKLLSRLSIIFENIARSLENVNFSKASKVIPIEWVFSTWCSIFQKYLMNNWHLRSISTLEVLLNTVSTIQSVSESCPEVNFYEWLNDKNLAYKNKLIYQDPDLATEFNLIIKEALSLPWPKKYNI.

A helical membrane pass occupies residues 20–40 (IFFTLTFSLSNLFLAICYLFL).

It localises to the membrane. This is an uncharacterized protein from Schizosaccharomyces pombe (strain 972 / ATCC 24843) (Fission yeast).